The following is a 607-amino-acid chain: WD repeat-containing protein 1 (607 aa).

WD repeat units lie at residues 4 to 45 (ELKK…IRNI), 48 to 87 (PAIA…IWDT), 93 to 135 (LLKY…LWDT), 138 to 176 (SVGE…FFEG), 180 to 218 (KFKF…LYDG), 224 to 263 (VGNL…IWDV), 270 to 306 (TTFH…YLDK), 311 to 351 (RPLR…YWDA), 358 to 408 (TFTG…KMDV), 432 to 474 (LKDK…LYSI), 480 to 518 (KDEG…VFNV), 523 to 561 (SEQN…VWTL), and 566 to 604 (ARIK…QWTV).

It belongs to the WD repeat AIP1 family.

It is found in the cell membrane. The protein resides in the cytoplasm. The protein localises to the cytoskeleton. Its subcellular location is the nucleus. In terms of biological role, induces disassembly of actin filaments in conjunction with ADF/cofilin family proteins. Doesn't sever actin filaments alone, but caps the barbed ends of filaments severed by cofilin, which blocks annealing and depolymerization and allows more extensive severing by cofilin. The chain is WD repeat-containing protein 1 from Xenopus tropicalis (Western clawed frog).